The sequence spans 707 residues: Lipase maturation factor 2 (707 aa).

A run of 10 helical transmembrane segments spans residues 10–30 (LFLQ…YTQI), 78–98 (LELL…LSPL), 102–122 (VIYL…QVFL), 123–143 (YFQW…VAPL), 165–185 (DLPF…SGVV), 227–247 (LSVV…FAPI), 259–279 (VLLQ…LMTL), 310–330 (ALLA…LAYG), 364–384 (LTLP…LSAL), and 399–419 (AVVQ…ISLV). 2 N-linked (GlcNAc...) asparagine glycosylation sites follow: Asn489 and Asn616. The chain crosses the membrane as a helical span at residues 637–657 (ALLWGLLMAVGAVRFVQALLA). The disordered stretch occupies residues 665–707 (PLAPVSGEKRRPASQKDSGAASEQATAAPNPCSSSSRTTRRKK). A compositionally biased stretch (polar residues) spans 679 to 691 (QKDSGAASEQATA).

This sequence belongs to the lipase maturation factor family.

It localises to the endoplasmic reticulum membrane. Functionally, involved in the maturation of specific proteins in the endoplasmic reticulum. May be required for maturation and transport of active lipoprotein lipase (LPL) through the secretory pathway. This Homo sapiens (Human) protein is Lipase maturation factor 2 (LMF2).